Here is a 203-residue protein sequence, read N- to C-terminus: Thymidylate kinase (203 aa).

10-17 provides a ligand contact to ATP; that stretch reads GIDGCGKT.

This sequence belongs to the thymidylate kinase family.

It catalyses the reaction dTMP + ATP = dTDP + ADP. Phosphorylation of dTMP to form dTDP in both de novo and salvage pathways of dTTP synthesis. In Thermoanaerobacter pseudethanolicus (strain ATCC 33223 / 39E) (Clostridium thermohydrosulfuricum), this protein is Thymidylate kinase.